A 209-amino-acid polypeptide reads, in one-letter code: FMN-dependent NADH:quinone oxidoreductase (209 aa).

FMN-binding positions include serine 10, 16–18 (SHS), and 98–101 (MWNF).

The protein belongs to the azoreductase type 1 family. In terms of assembly, homodimer. Requires FMN as cofactor.

It carries out the reaction 2 a quinone + NADH + H(+) = 2 a 1,4-benzosemiquinone + NAD(+). It catalyses the reaction N,N-dimethyl-1,4-phenylenediamine + anthranilate + 2 NAD(+) = 2-(4-dimethylaminophenyl)diazenylbenzoate + 2 NADH + 2 H(+). In terms of biological role, quinone reductase that provides resistance to thiol-specific stress caused by electrophilic quinones. Also exhibits azoreductase activity. Catalyzes the reductive cleavage of the azo bond in aromatic azo compounds to the corresponding amines. The chain is FMN-dependent NADH:quinone oxidoreductase from Nitratidesulfovibrio vulgaris (strain ATCC 29579 / DSM 644 / CCUG 34227 / NCIMB 8303 / VKM B-1760 / Hildenborough) (Desulfovibrio vulgaris).